A 152-amino-acid polypeptide reads, in one-letter code: MRKAIFPGSFDPITLGHEDIIKRGIPLFDEIVIAIGVNAEKKYMFSLEERKRFIEETFKDEPKVSVITYEGLTIDLAKKQKAHFILRGLRNPADFEFEKAIAHTNRKLSKIETVFLLTAASTSFISSSIVRDVLRHGGEYEMLVPDAVRVKK.

Ser9 lines the substrate pocket. Residues 9 to 10 and His17 each bind ATP; that span reads SF. Substrate-binding residues include Lys41, Thr73, and Arg87. ATP-binding positions include 88–90, Glu98, and 122–128; these read GLR and TSFISSS.

This sequence belongs to the bacterial CoaD family. As to quaternary structure, homohexamer. Mg(2+) serves as cofactor.

The protein localises to the cytoplasm. The enzyme catalyses (R)-4'-phosphopantetheine + ATP + H(+) = 3'-dephospho-CoA + diphosphate. It participates in cofactor biosynthesis; coenzyme A biosynthesis; CoA from (R)-pantothenate: step 4/5. Its function is as follows. Reversibly transfers an adenylyl group from ATP to 4'-phosphopantetheine, yielding dephospho-CoA (dPCoA) and pyrophosphate. This is Phosphopantetheine adenylyltransferase from Flavobacterium johnsoniae (strain ATCC 17061 / DSM 2064 / JCM 8514 / BCRC 14874 / CCUG 350202 / NBRC 14942 / NCIMB 11054 / UW101) (Cytophaga johnsonae).